Consider the following 463-residue polypeptide: 3-isopropylmalate dehydratase large subunit (463 aa).

Positions 347, 407, and 410 each coordinate [4Fe-4S] cluster.

The protein belongs to the aconitase/IPM isomerase family. LeuC type 1 subfamily. As to quaternary structure, heterodimer of LeuC and LeuD. [4Fe-4S] cluster serves as cofactor.

The enzyme catalyses (2R,3S)-3-isopropylmalate = (2S)-2-isopropylmalate. It functions in the pathway amino-acid biosynthesis; L-leucine biosynthesis; L-leucine from 3-methyl-2-oxobutanoate: step 2/4. In terms of biological role, catalyzes the isomerization between 2-isopropylmalate and 3-isopropylmalate, via the formation of 2-isopropylmaleate. The chain is 3-isopropylmalate dehydratase large subunit from Buchnera aphidicola subsp. Cinara cedri (strain Cc).